The sequence spans 1052 residues: Calmin (1052 aa).

The segment at 1–288 (MAAQEWDWFQ…IVTYVAQFLE (288 aa)) is actin-binding. The 108-residue stretch at 32-139 (NVQKRTFTRW…LIWNIILFFQ (108 aa)) folds into the Calponin-homology (CH) 1 domain. A compositionally biased stretch (low complexity) spans 148–168 (SRSSPSSSLSPGSGGTDSDSS). The tract at residues 148 to 178 (SRSSPSSSLSPGSGGTDSDSSYPPTPTTERS) is disordered. The region spanning 187–291 (RKAIKTLLSW…YVAQFLERFP (105 aa)) is the Calponin-homology (CH) 2 domain. Disordered regions lie at residues 391 to 420 (STGKTGSIAEPTPESSILSTRKDGRRSNSL), 455 to 545 (KATK…TLLA), 585 to 727 (STSQ…SPPL), and 758 to 929 (GEDL…DSSI). 2 stretches are compositionally biased toward basic and acidic residues: residues 455–465 (KATKELSKQDG) and 472–495 (VSKEKKKSEQEARLVLEAASDKVP). Positions 509-529 (AQPSQDSSFCNGTVESPSSQG) are enriched in polar residues. At S537 the chain carries Phosphoserine. Basic and acidic residues-rich tracts occupy residues 594 to 614 (PSSHEKTRGEEEGSENHAEKP), 622 to 651 (PRAETEAAESRLEPKKLEPPPKDPEQEDQG), and 659 to 669 (PADKKPKVYEK). S679 is modified (phosphoserine). The residue at position 710 (T710) is a Phosphothreonine. Residues 711–720 (LRSHSEEGLD) are compositionally biased toward basic and acidic residues. S724 carries the phosphoserine modification. Residues 759-773 (EDLKSEDTDLEHPED) show a composition bias toward basic and acidic residues. Positions 780–791 (REEEADEDEEEA) are enriched in acidic residues. Residues 792–801 (QSSQSSCSFS) are compositionally biased toward low complexity. A compositionally biased stretch (basic and acidic residues) spans 836–849 (SHEDHQPKETKENG). S856 bears the Phosphoserine mark. Positions 880 to 889 (SKKKEKRKHM) are enriched in basic residues. The residue at position 925 (S925) is a Phosphoserine. A helical; Anchor for type IV membrane protein membrane pass occupies residues 1027–1047 (VIYFILFLWLLVYCLLLFPQL).

As to expression, expressed in testis. Expressed during testis maturation process and in maturing spermatids. In brain, it is expressed in neurons of the hippocampus, cerebral cortex, and thalamus, Purkinje cells, and also in the choroid plexus and ependymal cells. Expressed predominantly in dendrites and cell bodies of the neurons, but not in axons. The level of expression increases during the period of maturation of the mouse brain after birth.

It is found in the membrane. The protein localises to the cytoplasm. The sequence is that of Calmin (Clmn) from Mus musculus (Mouse).